The chain runs to 298 residues: ATP synthase gamma chain (298 aa).

This sequence belongs to the ATPase gamma chain family. In terms of assembly, F-type ATPases have 2 components, CF(1) - the catalytic core - and CF(0) - the membrane proton channel. CF(1) has five subunits: alpha(3), beta(3), gamma(1), delta(1), epsilon(1). CF(0) has three main subunits: a, b and c.

The protein resides in the cell inner membrane. Functionally, produces ATP from ADP in the presence of a proton gradient across the membrane. The gamma chain is believed to be important in regulating ATPase activity and the flow of protons through the CF(0) complex. The protein is ATP synthase gamma chain of Acidithiobacillus ferridurans.